The sequence spans 68 residues: Large ribosomal subunit protein bL32 (68 aa).

It belongs to the bacterial ribosomal protein bL32 family.

This Ruegeria pomeroyi (strain ATCC 700808 / DSM 15171 / DSS-3) (Silicibacter pomeroyi) protein is Large ribosomal subunit protein bL32.